Consider the following 99-residue polypeptide: Putative pterin-4-alpha-carbinolamine dehydratase (99 aa).

It belongs to the pterin-4-alpha-carbinolamine dehydratase family.

The catalysed reaction is (4aS,6R)-4a-hydroxy-L-erythro-5,6,7,8-tetrahydrobiopterin = (6R)-L-erythro-6,7-dihydrobiopterin + H2O. This Bradyrhizobium sp. (strain BTAi1 / ATCC BAA-1182) protein is Putative pterin-4-alpha-carbinolamine dehydratase.